The following is a 187-amino-acid chain: Large ribosomal subunit protein uL5 (187 aa).

This sequence belongs to the universal ribosomal protein uL5 family. In terms of assembly, part of the 50S ribosomal subunit; part of the 5S rRNA/L5/L18/L25 subcomplex. Contacts the 5S rRNA and the P site tRNA. Forms a bridge to the 30S subunit in the 70S ribosome.

This is one of the proteins that bind and probably mediate the attachment of the 5S RNA into the large ribosomal subunit, where it forms part of the central protuberance. In the 70S ribosome it contacts protein S13 of the 30S subunit (bridge B1b), connecting the 2 subunits; this bridge is implicated in subunit movement. Contacts the P site tRNA; the 5S rRNA and some of its associated proteins might help stabilize positioning of ribosome-bound tRNAs. This is Large ribosomal subunit protein uL5 from Mycobacteroides abscessus (strain ATCC 19977 / DSM 44196 / CCUG 20993 / CIP 104536 / JCM 13569 / NCTC 13031 / TMC 1543 / L948) (Mycobacterium abscessus).